A 437-amino-acid chain; its full sequence is Enolase (437 aa).

Q162 contributes to the (2R)-2-phosphoglycerate binding site. The active-site Proton donor is E204. 3 residues coordinate Mg(2+): D251, E297, and D324. 4 residues coordinate (2R)-2-phosphoglycerate: K349, R378, S379, and K400. The active-site Proton acceptor is K349.

The protein belongs to the enolase family. Requires Mg(2+) as cofactor.

The protein localises to the cytoplasm. Its subcellular location is the secreted. The protein resides in the cell surface. It catalyses the reaction (2R)-2-phosphoglycerate = phosphoenolpyruvate + H2O. It participates in carbohydrate degradation; glycolysis; pyruvate from D-glyceraldehyde 3-phosphate: step 4/5. Catalyzes the reversible conversion of 2-phosphoglycerate (2-PG) into phosphoenolpyruvate (PEP). It is essential for the degradation of carbohydrates via glycolysis. The sequence is that of Enolase from Chlorobium luteolum (strain DSM 273 / BCRC 81028 / 2530) (Pelodictyon luteolum).